The following is a 705-amino-acid chain: Solute carrier family 28 member 3 (705 aa).

The span at 1 to 21 shows a compositional bias: basic and acidic residues; sequence MSRSDPDPGKNSEPSKSKMSL. Residues 1-96 are disordered; that stretch reads MSRSDPDPGK…TEEESEDERQ (96 aa). At 1-119 the chain is on the cytoplasmic side; sequence MSRSDPDPGK…FCRKHRVILQ (119 aa). Over residues 48 to 63 the composition is skewed to polar residues; it reads APGNSTVRSRVVQSGE. The segment covering 65 to 74 has biased composition (basic and acidic residues); sequence GRAKQDDRQI. Residues 120-140 form a helical membrane-spanning segment; it reads HTIWAVLLTGFLALVIAACAL. The Extracellular portion of the chain corresponds to 141-145; that stretch reads NFHRA. Residues 146–166 traverse the membrane as a helical segment; it reads LPLFVITLVTIFFVVWDRLMA. At 167–190 the chain is on the cytoplasmic side; it reads KYEQRIDDVLSPGKRLLERHWFWL. Residues 191–211 traverse the membrane as a helical segment; it reads KWVVWCSLILAVILWLALDTA. Residues 212–214 are Extracellular-facing; it reads RLG. Residues 215 to 236 traverse the membrane as a helical segment; that stretch reads QQQLISFGGLVMYIVLLFLFSK. Residues 237 to 244 lie on the Cytoplasmic side of the membrane; it reads HPTRVYWR. A helical transmembrane segment spans residues 245–264; it reads PVFWGIGLQFLLGLLILRTR. At 265–301 the chain is on the extracellular side; the sequence is PGFVAFDWMGKQVQTFLGYTDAGAQFVFGEKYTDHFF. Residues 302–322 traverse the membrane as a helical segment; that stretch reads AFKILPIVVFFSTVMSMLYYL. Residues 323 to 346 lie on the Cytoplasmic side of the membrane; sequence GLMQWIIRKVGWLMLVTMGSSPIE. Positions 347–365 form an intramembrane region, helical; it reads SVVAAGNIFVGQTESPLLV. Over 366–378 the chain is Cytoplasmic; it reads QPYLPHVTKSELH. The helical transmembrane segment at 379–401 threads the bilayer; the sequence is TIMTAGFATIAGSVLGAYISFGV. Residues 402–403 are Extracellular-facing; it reads SS. A helical transmembrane segment spans residues 404–425; that stretch reads THLLTASVMSAPAALAVAKLFW. At 426–460 the chain is on the cytoplasmic side; sequence PETEKPKITLKNAMKMENGDSRNLLEAATQGASSS. The helical transmembrane segment at 461 to 486 threads the bilayer; the sequence is IPLVANIAANLIAFLALLSFVNSALS. Topologically, residues 487–524 are extracellular; that stretch reads WFGSMFDYPQLSFELICSYIFMPFSFMMGVDWQDRFMV. An intramembrane region (helical) is located at residues 525-544; that stretch reads AKLIGYKTFFNEFVAYEHLS. At 545–583 the chain is on the extracellular side; it reads KFINLRKAAGPKFVNGVQQYMSIRSETIATYALCGFANF. The chain crosses the membrane as a helical span at residues 584-594; sequence GSLGIVIGGLT. Over 595-607 the chain is Cytoplasmic; that stretch reads SIAPSRKRDIASG. Residues 608 to 630 form a helical membrane-spanning segment; that stretch reads AMRALIAGTIACFMTACIAGMLS. Topologically, residues 631–705 are extracellular; sequence DTPVAINCHH…LNCGWIPNIP (75 aa).

Belongs to the concentrative nucleoside transporter (CNT) (TC 2.A.41) family. Homotrimer. Expressed in kidney; in the proximal tubule, glomerulus and cortical collecting duct.

Its subcellular location is the cell membrane. It carries out the reaction thymidine(out) + 2 Na(+)(out) = thymidine(in) + 2 Na(+)(in). It catalyses the reaction cytidine(out) + 2 Na(+)(out) = cytidine(in) + 2 Na(+)(in). The enzyme catalyses uridine(out) + 2 Na(+)(out) = uridine(in) + 2 Na(+)(in). The catalysed reaction is adenosine(out) + 2 Na(+)(out) = adenosine(in) + 2 Na(+)(in). It carries out the reaction guanosine(out) + 2 Na(+)(out) = guanosine(in) + 2 Na(+)(in). It catalyses the reaction inosine(out) + 2 Na(+)(out) = inosine(in) + 2 Na(+)(in). Sodium-dependent, pyrimidine- and purine-selective. Involved in the homeostasis of endogenous nucleosides. Exhibits the transport characteristics of the nucleoside transport system cib or N3 subtype (N3/cib) (with marked transport of both thymidine and inosine). Employs a 2:1 sodium/nucleoside ratio. Also able to transport gemcitabine, 3'-azido-3'-deoxythymidine (AZT), ribavirin and 3-deazauridine. In Rattus norvegicus (Rat), this protein is Solute carrier family 28 member 3 (Slc28a3).